The primary structure comprises 314 residues: Homoserine kinase (314 aa).

96-106 is a binding site for ATP; that stretch reads PIGSGLGSSAC.

It belongs to the GHMP kinase family. Homoserine kinase subfamily.

Its subcellular location is the cytoplasm. The enzyme catalyses L-homoserine + ATP = O-phospho-L-homoserine + ADP + H(+). Its pathway is amino-acid biosynthesis; L-threonine biosynthesis; L-threonine from L-aspartate: step 4/5. In terms of biological role, catalyzes the ATP-dependent phosphorylation of L-homoserine to L-homoserine phosphate. The chain is Homoserine kinase from Haemophilus influenzae (strain PittEE).